The chain runs to 23 residues: Caerulein precursor fragment R6 (23 aa).

As to expression, expressed by the skin glands.

It is found in the secreted. Functionally, antimicrobial peptide. In Xenopus ruwenzoriensis (Uganda clawed frog), this protein is Caerulein precursor fragment R6.